The primary structure comprises 70 residues: Putative membrane protein insertion efficiency factor (70 aa).

This sequence belongs to the UPF0161 family.

Its subcellular location is the cell membrane. Could be involved in insertion of integral membrane proteins into the membrane. In Moorella thermoacetica (strain ATCC 39073 / JCM 9320), this protein is Putative membrane protein insertion efficiency factor.